The chain runs to 358 residues: Glyoxylate/succinic semialdehyde reductase 2, chloroplastic (358 aa).

A chloroplast-targeting transit peptide spans 1-44 (MPLVSLSFASSSSKAMALCSICPRIPLRFRPKPISPFLSKPQIC). NADP(+)-binding positions include 70-84 (GFLG…MAQN) and Thr161. Residue Lys236 is part of the active site. Lys304 serves as a coordination point for NADP(+).

It belongs to the HIBADH-related family. NP60 subfamily.

Its subcellular location is the plastid. The protein localises to the chloroplast stroma. It catalyses the reaction glycolate + NADP(+) = glyoxylate + NADPH + H(+). It carries out the reaction 4-hydroxybutanoate + NADP(+) = succinate semialdehyde + NADPH + H(+). Its activity is regulated as follows. The ratio of NADPH/NADP(+) may regulate enzymatic activity. In terms of biological role, catalyzes the NADPH-dependent reduction of glyoxylate to glycolate as well as succinic semialdehyde (SSA) to gamma-hydroxybutyrate in vitro. May function in redox homeostasis and play a role in oxidative stress tolerance by detoxifying glyoxylate and SSA generated in glycolate metabolism and GABA metabolism, respectively. The chain is Glyoxylate/succinic semialdehyde reductase 2, chloroplastic (GLYR2) from Arabidopsis thaliana (Mouse-ear cress).